The following is a 105-amino-acid chain: UPF0060 membrane protein Ajs_1326 (105 aa).

4 helical membrane passes run 4 to 24 (FALFIATALAEIVGCYLPYLW), 30 to 50 (SAWLLVPAAASLALFAWLLTL), 60 to 80 (AAYGGVYIGVALLWLWIVDGI), and 82 to 102 (PTAWDVAGVAVALTGMGLIMF).

The protein belongs to the UPF0060 family.

It localises to the cell inner membrane. The polypeptide is UPF0060 membrane protein Ajs_1326 (Acidovorax sp. (strain JS42)).